Here is a 421-residue protein sequence, read N- to C-terminus: MTESVLDYMTRLGHAAREASRVLARTSTAQKNRALEAAAAALDDAREALAAANAQDLAAGRAGGLDEAMLDRLALTPARIDEMIEGLRQVARLPDPVGEIRDMRYMPSGIQVGKMRVPLGVIGIVYESRPNVTIDAASLCLKSGNATILRGGSEAIHSNQAIARCIRLGLAEAGLPAAAVQVVETTDRAAVGALIGMPEFVDVIVPRGGKGLIERISREAKVPVIKHLDGICHVYIDSAADLDKAIRVADNAKTQRFAPCNTMETLLVHAAIAARALPPLGEIYRAKGVELRGCPRSRELLGPGTLEASEEDWSSEYNAPILSVRVVDSLDEAIAHINRYGSHHTDAIVTESFTDARRFLAEVDSSSVMVNASTRFADGFEYGLGAEIGISTDKLHARGPVGLEGLTSEKYVVFGDGHVRG.

It belongs to the gamma-glutamyl phosphate reductase family.

The protein localises to the cytoplasm. The catalysed reaction is L-glutamate 5-semialdehyde + phosphate + NADP(+) = L-glutamyl 5-phosphate + NADPH + H(+). It functions in the pathway amino-acid biosynthesis; L-proline biosynthesis; L-glutamate 5-semialdehyde from L-glutamate: step 2/2. Catalyzes the NADPH-dependent reduction of L-glutamate 5-phosphate into L-glutamate 5-semialdehyde and phosphate. The product spontaneously undergoes cyclization to form 1-pyrroline-5-carboxylate. In Azotobacter vinelandii (strain DJ / ATCC BAA-1303), this protein is Gamma-glutamyl phosphate reductase.